The primary structure comprises 283 residues: Polyamine aminopropyltransferase (283 aa).

Residues 2–237 (ELWYTDQHTK…GHWLFGFASK (236 aa)) form the PABS domain. Gln31 serves as a coordination point for S-methyl-5'-thioadenosine. Positions 62 and 86 each coordinate spermidine. S-methyl-5'-thioadenosine contacts are provided by residues Glu106 and 137–138 (EG). Asp155 functions as the Proton acceptor in the catalytic mechanism. Spermidine is bound at residue 155–158 (DCAD). Pro162 is an S-methyl-5'-thioadenosine binding site.

The protein belongs to the spermidine/spermine synthase family. In terms of assembly, homodimer or homotetramer.

The protein resides in the cytoplasm. It catalyses the reaction S-adenosyl 3-(methylsulfanyl)propylamine + putrescine = S-methyl-5'-thioadenosine + spermidine + H(+). It participates in amine and polyamine biosynthesis; spermidine biosynthesis; spermidine from putrescine: step 1/1. Functionally, catalyzes the irreversible transfer of a propylamine group from the amino donor S-adenosylmethioninamine (decarboxy-AdoMet) to putrescine (1,4-diaminobutane) to yield spermidine. The protein is Polyamine aminopropyltransferase of Lachnoclostridium phytofermentans (strain ATCC 700394 / DSM 18823 / ISDg) (Clostridium phytofermentans).